Reading from the N-terminus, the 637-residue chain is Early transcription factor 70 kDa subunit (637 aa).

Residues arginine 32–glutamate 185 form the Helicase ATP-binding domain. Position 45–52 (histidine 45–threonine 52) interacts with ATP. The short motif at aspartate 135 to histidine 138 is the DEXH box element. One can recognise a Helicase C-terminal domain in the interval lysine 327–leucine 507.

Belongs to the helicase family. VETF subfamily. Heterodimer of a 70 kDa and a 82 kDa subunit. Part of the early transcription complex composed of ETF, RAP94/OPG109, and the DNA-directed RNA polymerase.

The protein resides in the virion. In terms of biological role, acts with RNA polymerase to initiate transcription from early gene promoters. Is recruited by the RPO-associated protein of 94 kDa RAP94/OPG109 to form the early transcription complex, which also contains the core RNA polymerase. ETF heterodimer binds to early gene promoters. In Homo sapiens (Human), this protein is Early transcription factor 70 kDa subunit (OPG118).